A 128-amino-acid polypeptide reads, in one-letter code: MSKPKRERSLPENEAKAIARMLRVSPQKLNLVAQLIRGRKASAALADLQFSRKRIAGDVKKCLESAIANAENNHDLDVDELIVSEAFVGNGMVMKRFAPRGRGRSGRIYKPFSQLTIVVRQVEAEASA.

Belongs to the universal ribosomal protein uL22 family. As to quaternary structure, part of the 50S ribosomal subunit.

This protein binds specifically to 23S rRNA; its binding is stimulated by other ribosomal proteins, e.g. L4, L17, and L20. It is important during the early stages of 50S assembly. It makes multiple contacts with different domains of the 23S rRNA in the assembled 50S subunit and ribosome. Functionally, the globular domain of the protein is located near the polypeptide exit tunnel on the outside of the subunit, while an extended beta-hairpin is found that lines the wall of the exit tunnel in the center of the 70S ribosome. The protein is Large ribosomal subunit protein uL22 of Nitrobacter winogradskyi (strain ATCC 25391 / DSM 10237 / CIP 104748 / NCIMB 11846 / Nb-255).